A 67-amino-acid polypeptide reads, in one-letter code: Peptide Hp1239 (67 aa).

Positions 1–23 are cleaved as a signal peptide; sequence MKTQFTVLLITLVLFQMLSQSEA. Phe-36 is subject to Phenylalanine amide. Residues 40–67 constitute a propeptide that is removed on maturation; it reads GLSDLSDLDELFDGEITKADLDLLREIM.

This sequence belongs to the non-disulfide-bridged peptide (NDBP) superfamily. Short antimicrobial peptide (group 4) family. As to expression, expressed by the venom gland.

It localises to the secreted. Its subcellular location is the target cell membrane. Functionally, amphipathic peptide with antibacterial activities. Shows antiviral activities against the herpes simplex virus type-1. It potently inhibits the initial infection by provoking the rupture of viral envelop and the dissociation of proteins from the virions (EC(50) is 0.41 uM). It also effectively inhibits viral attachment (EC(50) is 5.73 uM), viral entry (EC(50) is 4.32 uM) and viral proliferation after infection (EC(50) is 8.41 uM). Morever, it enters mammalian tested cells (Vero) and reduces the intracellular infectivity. The sequence is that of Peptide Hp1239 from Heterometrus petersii (Asian forest scorpion).